A 376-amino-acid chain; its full sequence is Probable dual-specificity RNA methyltransferase RlmN (376 aa).

A disordered region spans residues 1 to 25 (MSDSERTSLPLVFDEPRGRKKPPRH). The active-site Proton acceptor is the Glu-113. Positions 119 to 362 (YPDRATMCVS…PTTVRDTRGR (244 aa)) constitute a Radical SAM core domain. A disulfide bond links Cys-126 and Cys-368. Positions 133, 137, and 140 each coordinate [4Fe-4S] cluster. S-adenosyl-L-methionine contacts are provided by residues 188 to 189 (GE), Ser-222, 245 to 247 (SLH), and Asn-325. Cys-368 acts as the S-methylcysteine intermediate in catalysis.

It belongs to the radical SAM superfamily. RlmN family. [4Fe-4S] cluster is required as a cofactor.

It localises to the cytoplasm. It carries out the reaction adenosine(2503) in 23S rRNA + 2 reduced [2Fe-2S]-[ferredoxin] + 2 S-adenosyl-L-methionine = 2-methyladenosine(2503) in 23S rRNA + 5'-deoxyadenosine + L-methionine + 2 oxidized [2Fe-2S]-[ferredoxin] + S-adenosyl-L-homocysteine. The enzyme catalyses adenosine(37) in tRNA + 2 reduced [2Fe-2S]-[ferredoxin] + 2 S-adenosyl-L-methionine = 2-methyladenosine(37) in tRNA + 5'-deoxyadenosine + L-methionine + 2 oxidized [2Fe-2S]-[ferredoxin] + S-adenosyl-L-homocysteine. Its function is as follows. Specifically methylates position 2 of adenine 2503 in 23S rRNA and position 2 of adenine 37 in tRNAs. This Nocardioides sp. (strain ATCC BAA-499 / JS614) protein is Probable dual-specificity RNA methyltransferase RlmN.